A 937-amino-acid chain; its full sequence is Aconitate hydratase A (937 aa).

The interval 410 to 450 (MANEGGFQPGSTSDLDNYNASWPGEGESAAANAEGRPSNPV) is disordered. A compositionally biased stretch (polar residues) spans 418–429 (PGSTSDLDNYNA). Residues 433 to 444 (GEGESAAANAEG) show a composition bias toward low complexity. 3 residues coordinate [4Fe-4S] cluster: Cys475, Cys541, and Cys544.

This sequence belongs to the aconitase/IPM isomerase family. Monomer. The cofactor is [4Fe-4S] cluster.

The catalysed reaction is citrate = D-threo-isocitrate. The enzyme catalyses (2S,3R)-3-hydroxybutane-1,2,3-tricarboxylate = 2-methyl-cis-aconitate + H2O. It participates in carbohydrate metabolism; tricarboxylic acid cycle; isocitrate from oxaloacetate: step 2/2. Its pathway is organic acid metabolism; propanoate degradation. In terms of biological role, involved in the catabolism of short chain fatty acids (SCFA) via the tricarboxylic acid (TCA)(acetyl degradation route) and probably via the 2-methylcitrate cycle I (propionate degradation route). Catalyzes the reversible isomerization of citrate to isocitrate via cis-aconitate. Could catalyze the hydration of 2-methyl-cis-aconitate to yield (2R,3S)-2-methylisocitrate. The apo form of AcnA functions as a RNA-binding regulatory protein. In Corynebacterium efficiens (strain DSM 44549 / YS-314 / AJ 12310 / JCM 11189 / NBRC 100395), this protein is Aconitate hydratase A (acn).